A 90-amino-acid polypeptide reads, in one-letter code: Small ribosomal subunit protein uS15c (90 aa).

It belongs to the universal ribosomal protein uS15 family. As to quaternary structure, part of the 30S ribosomal subunit.

It localises to the plastid. Its subcellular location is the chloroplast. This is Small ribosomal subunit protein uS15c (rps15) from Secale cereale (Rye).